The following is a 534-amino-acid chain: Probable DNA polymerase epsilon subunit 2 (534 aa).

The protein belongs to the DNA polymerase epsilon subunit B family. As to quaternary structure, consists of four subunits.

The protein localises to the nucleus. Functionally, accessory component of the DNA polymerase epsilon complex. Participates in DNA repair and in chromosomal DNA replication. The chain is Probable DNA polymerase epsilon subunit 2 (pole-2) from Caenorhabditis elegans.